The primary structure comprises 175 residues: ADP-ribosylation factor 6 (175 aa).

G2 carries N-myristoyl glycine lipidation. GTP-binding positions include 20–27 (GLDAAGKT), 63–67 (DVGGQ), and 122–125 (NKQD).

It belongs to the small GTPase superfamily. Arf family. Expressed in the head (at protein level).

It localises to the golgi apparatus. With respect to regulation, activation is generally mediated by a guanine exchange factor (GEF), while inactivation through hydrolysis of bound GTP is catalyzed by a GTPase activating protein (GAP). May be activated by Efa6. In terms of biological role, GTP-binding protein involved in protein trafficking; may modulate vesicle budding and uncoating within the Golgi apparatus. Promotes cell movement and remodeling of the actin cytoskeleton during compound eye morphogenesis. Required for normal ethanol-induced tolerance and preference. Probably after Efa6-mediated activation, counteracts ethanol-induced sedation. The chain is ADP-ribosylation factor 6 from Drosophila melanogaster (Fruit fly).